Consider the following 185-residue polypeptide: Large ribosomal subunit protein uL16m (185 aa).

It belongs to the universal ribosomal protein uL16 family.

It localises to the mitochondrion. The chain is Large ribosomal subunit protein uL16m (RPL16) from Oryza sativa subsp. japonica (Rice).